The primary structure comprises 102 residues: Small ribosomal subunit protein uS10 (102 aa).

The protein belongs to the universal ribosomal protein uS10 family. As to quaternary structure, part of the 30S ribosomal subunit.

Functionally, involved in the binding of tRNA to the ribosomes. In Pelagibacter ubique (strain HTCC1062), this protein is Small ribosomal subunit protein uS10.